A 65-amino-acid chain; its full sequence is Alpha-toxin OD1 (65 aa).

The LCN-type CS-alpha/beta domain occupies 3 to 65 (RDAYIADDKN…VPIRIPGKCR (63 aa)). Residues 9–11 (DDK) carry the Important for toxin selectivity for individual Nav channel subtype (Nav1.6/SCN8A and Nav1.7/SCN9A), but not for toxin potency motif. Intrachain disulfides connect C13–C64, C17–C37, C23–C47, and C27–C49. At R65 the chain carries Arginine amide.

Belongs to the long (4 C-C) scorpion toxin superfamily. Sodium channel inhibitor family. Alpha subfamily. Expressed by the venom gland.

Its subcellular location is the secreted. Alpha toxins bind voltage-independently at site-3 of sodium channels and inhibit the inactivation of the activated channels. The toxin affect mammalian sodium channels Nav1.7/SCN9A (EC(50)=4.5 nM), Nav1.4/SCN4A (EC(50)=9.6 nM), Nav1.6/SCN8A (EC(50)=30 nM), Nav1.5/SCN5A (only at micromolar concentrations), and insect sodium channel para/tipE (EC(50)=80 nM). In vivo, intraplantar administration of this toxin elicits pain behaviors, including licking and flinching of the hind paw. The protein is Alpha-toxin OD1 of Odontobuthus doriae (Yellow Iranian scorpion).